A 185-amino-acid chain; its full sequence is MNWRSEHIWIELLKGSRKRGNFFWACILFLGSLGFLAVGASSYLGKNMISLLPSQQILFFPQGVVMSFYGIAGLFISSYLWCTILWNVGSGYDRFDRKEGIVCIFRWGFPGIKRRIFLQFLVRDIQSIRIQVKEGLYPRRILYMEIRGQGVIPLTRTDEKFFTPREIEQKAAELAYFLGVPIEVF.

The next 2 membrane-spanning stretches (helical) occupy residues 20-40 (GNFF…AVGA) and 57-77 (ILFF…LFIS).

The protein belongs to the Ycf4 family.

Its subcellular location is the plastid. It localises to the chloroplast thylakoid membrane. Its function is as follows. Seems to be required for the assembly of the photosystem I complex. The protein is Photosystem I assembly protein Ycf4 of Sorghum bicolor (Sorghum).